Here is a 52-residue protein sequence, read N- to C-terminus: ATP synthase protein 8 (52 aa).

Residues 7 to 27 (MKWFLIYFIYLLIFYLFIMLI) form a helical membrane-spanning segment.

It belongs to the ATPase protein 8 family. F-type ATPases have 2 components, CF(1) - the catalytic core - and CF(0) - the membrane proton channel.

It is found in the mitochondrion membrane. Functionally, mitochondrial membrane ATP synthase (F(1)F(0) ATP synthase or Complex V) produces ATP from ADP in the presence of a proton gradient across the membrane which is generated by electron transport complexes of the respiratory chain. F-type ATPases consist of two structural domains, F(1) - containing the extramembraneous catalytic core and F(0) - containing the membrane proton channel, linked together by a central stalk and a peripheral stalk. During catalysis, ATP synthesis in the catalytic domain of F(1) is coupled via a rotary mechanism of the central stalk subunits to proton translocation. Part of the complex F(0) domain. Minor subunit located with subunit a in the membrane. This is ATP synthase protein 8 (mt:ATPase8) from Apis mellifera ligustica (Common honeybee).